A 328-amino-acid polypeptide reads, in one-letter code: UPF0194 membrane protein YPTS_1292 (328 aa).

Residues 1–22 (MNRKKIIVAAVIVALLATLAYG) form the signal peptide. Coiled coils occupy residues 80–109 (YLNA…REEE) and 142–209 (AVSA…ILLA).

It belongs to the UPF0194 family.

Its subcellular location is the periplasm. This is UPF0194 membrane protein YPTS_1292 from Yersinia pseudotuberculosis serotype IB (strain PB1/+).